The chain runs to 894 residues: Phosphinomethylmalate isomerase (894 aa).

The [4Fe-4S] cluster site is built by Cys-438, Cys-504, and Cys-507.

This sequence belongs to the aconitase/IPM isomerase family. It depends on [4Fe-4S] cluster as a cofactor.

It carries out the reaction phosphinomethylmalate = phosphinomethylisomalate. It catalyses the reaction phosphinomethylmalate = 2-(phosphinatomethylidene)butanedioate + H2O. The enzyme catalyses 2-(phosphinatomethylidene)butanedioate + H2O = phosphinomethylisomalate. It participates in secondary metabolite biosynthesis; bialaphos biosynthesis. Its function is as follows. Isomerase involved in the biosynthesis of phosphinothricin tripeptide (PTT), also known as bialaphos (BA), a natural-product antibiotic and potent herbicide. Probably catalyzes the isomerization of phosphinomethylmalate to phosphinomethylisomalate. Shows no standard aconitase activity with citrate as a substrate and is not able to complement an acnA mutant. The chain is Phosphinomethylmalate isomerase from Streptomyces viridochromogenes (strain DSM 40736 / JCM 4977 / BCRC 1201 / Tue 494).